Consider the following 334-residue polypeptide: L-lactate dehydrogenase B chain (334 aa).

Residue Ala-2 is modified to N-acetylalanine. Residue Lys-7 is modified to N6-acetyllysine. Ser-44 carries the phosphoserine modification. NAD(+) contacts are provided by residues 53 to 58 (DVLEDK) and Arg-100. Lys-58 is modified (N6-acetyllysine). Position 107 (Arg-107) interacts with substrate. Lys-119 is subject to N6-acetyllysine. Residue Asn-139 participates in NAD(+) binding. 2 residues coordinate substrate: Asn-139 and Arg-170. Catalysis depends on His-194, which acts as the Proton acceptor. Tyr-240 bears the Phosphotyrosine mark. Position 249 (Thr-249) interacts with substrate. Lys-329 carries the post-translational modification N6-acetyllysine.

The protein belongs to the LDH/MDH superfamily. LDH family. As to quaternary structure, homotetramer. Interacts with PTEN upstream reading frame protein MP31; the interaction leads to inhibition of mitochondrial lactate dehydrogenase activity, preventing conversion of lactate to pyruvate in mitochondria.

The protein resides in the cytoplasm. It localises to the mitochondrion inner membrane. The enzyme catalyses (S)-lactate + NAD(+) = pyruvate + NADH + H(+). It participates in fermentation; pyruvate fermentation to lactate; (S)-lactate from pyruvate: step 1/1. Interconverts simultaneously and stereospecifically pyruvate and lactate with concomitant interconversion of NADH and NAD(+). In Monodelphis domestica (Gray short-tailed opossum), this protein is L-lactate dehydrogenase B chain (LDHB).